Reading from the N-terminus, the 210-residue chain is MQRPEAWPRPHPGEGAAAAQAGGPAPPARAGEPSGLRLQEPSLYTIKAVFILDNDGRRLLAKYYDDTFPSMKEQMVFEKNVFNKTSRTESEIAFFGGMTIVYKNSIDLFLYVVGSSYENELMLMSVLTCLFESLNHMLRKNVEKRWLLENMDGAFLVLDEIVDGGVILESDPQQVIQKVNFRADDGGLTEQSVAQVLQSAKEQIKWSLLK.

Over residues Met-1–Pro-12 the composition is skewed to basic and acidic residues. Residues Met-1 to Ser-34 form a disordered region. The span at Gly-13–Ser-34 shows a compositional bias: low complexity.

The protein belongs to the adaptor complexes small subunit family. In terms of assembly, oligomeric complex.

The protein resides in the cytoplasm. It localises to the endoplasmic reticulum-Golgi intermediate compartment membrane. It is found in the golgi apparatus membrane. The protein localises to the cytoplasmic vesicle. Its subcellular location is the COPI-coated vesicle membrane. In terms of biological role, the coatomer is a cytosolic protein complex that binds to dilysine motifs and reversibly associates with Golgi non-clathrin-coated vesicles, which further mediate biosynthetic protein transport from the ER, via the Golgi up to the trans Golgi network. Coatomer complex is required for budding from Golgi membranes, and is essential for the retrograde Golgi-to-ER transport of dilysine-tagged proteins. The zeta subunit may be involved in regulating the coat assembly and, hence, the rate of biosynthetic protein transport due to its association-dissociation properties with the coatomer complex. This is Coatomer subunit zeta-2 (COPZ2) from Homo sapiens (Human).